The sequence spans 505 residues: Tyrosine-protein kinase FRK (505 aa).

Residues Ser-37 and Ser-40 each carry the phosphoserine modification. An SH3 domain is found at 42–110 (RHGHYFVALF…PSNYVAEDRS (69 aa)). The region spanning 116–208 (WFFGAIGRSD…GLCVKLGKPC (93 aa)) is the SH2 domain. Thr-178 carries the phosphothreonine modification. One can recognise a Protein kinase domain in the interval 234–491 (IQLLKRLGSG…TLRWKLEDYF (258 aa)). Residues 240-248 (LGSGQFGEV) and Lys-262 each bind ATP. Asp-354 acts as the Proton acceptor in catalysis. Tyr-387 is modified (phosphotyrosine; by autocatalysis).

The protein belongs to the protein kinase superfamily. Tyr protein kinase family. SRC subfamily. Interacts (via the SH3-domain) with PTEN. Interacts with RB1. Predominantly expressed in epithelial derived cell lines and tissues, especially normal liver, kidney, breast and colon.

The protein resides in the cytoplasm. Its subcellular location is the nucleus. The enzyme catalyses L-tyrosyl-[protein] + ATP = O-phospho-L-tyrosyl-[protein] + ADP + H(+). In terms of biological role, non-receptor tyrosine-protein kinase that negatively regulates cell proliferation. Positively regulates PTEN protein stability through phosphorylation of PTEN on 'Tyr-336', which in turn prevents its ubiquitination and degradation, possibly by reducing its binding to NEDD4. May function as a tumor suppressor. The sequence is that of Tyrosine-protein kinase FRK (FRK) from Homo sapiens (Human).